The chain runs to 129 residues: Small ribosomal subunit protein uS8 (129 aa).

Belongs to the universal ribosomal protein uS8 family. As to quaternary structure, part of the 30S ribosomal subunit. Contacts proteins S5 and S12.

In terms of biological role, one of the primary rRNA binding proteins, it binds directly to 16S rRNA central domain where it helps coordinate assembly of the platform of the 30S subunit. In Colwellia psychrerythraea (strain 34H / ATCC BAA-681) (Vibrio psychroerythus), this protein is Small ribosomal subunit protein uS8.